A 163-amino-acid polypeptide reads, in one-letter code: T-cell surface glycoprotein CD3 zeta chain (163 aa).

The N-terminal stretch at 1–21 (MKWKALFTAAILQAQLPITEA) is a signal peptide. Topologically, residues 22–30 (QSFGLLDPK) are extracellular. The helical transmembrane segment at 31–51 (LCYLLDGILFIYGVILTALFL) threads the bilayer. Residues 52–163 (RVKFSRSADA…ALHMQALPPR (112 aa)) lie on the Cytoplasmic side of the membrane. The residue at position 58 (S58) is a Phosphoserine. 3 consecutive ITAM domains span residues 61–89 (APAYQQGQNQLYNELNLGRREEYDVLDKR), 99–127 (KPRRKNPQEGLYNELQKDKMAEAYSEIGM), and 130–158 (ERRRGKGHDGLYQGLSTATKDTYDALHMQ). Phosphotyrosine is present on residues Y64, Y72, Y83, Y110, Y122, Y141, and Y152. Positions 83–98 (YDVLDKRRGRDPEMGG) are enriched in basic and acidic residues. A disordered region spans residues 83–111 (YDVLDKRRGRDPEMGGKPRRKNPQEGLYN).

Belongs to the CD3Z/FCER1G family. As to quaternary structure, the TCR-CD3 complex is composed of a CD3D/CD3E and a CD3G/CD3E heterodimers that preferentially associate with TCRalpha and TCRbeta, respectively, to form TCRalpha/CD3E/CD3G and TCRbeta/CD3G/CD3E trimers. In turn, the hexamer interacts with CD3Z homodimer to form the TCR-CD3 complex. Alternatively, TCRalpha and TCRbeta can be replaced by TCRgamma and TCRdelta. Interacts with SLA. Interacts with TRAT1. Interacts with DOCK2. Interacts with SLA2. Interacts with SHB. Interacts with ZAP70. Interacts (tyrosine phosphorylated) with SHC1 (via SH2 domain). Interacts with PTPRC. Interacts with CRK; this interaction regulates CD3Z phosphorylation. Interacts (on T cell side) with CD81, ICAM1 and CD9 at immunological synapses between antigen-presenting cells and T cells. Interacts with CD160. Interacts with LY6E. Interacts with LY6E. The signaling subunit of immunoglobulin gamma (IgG) Fc receptor complex. As a homodimer or a heterodimer with FCER1G, associates with the ligand binding subunit FCGR3A (via transmembrane domain); this interaction is a prerequisite for Fc receptor complex expression on the cell surface. Interacts with CD5. Post-translationally, phosphorylated on Tyr residues after T-cell receptor triggering by LCK in association with CD4/CD8.

The protein localises to the cell membrane. Functionally, part of the TCR-CD3 complex present on T-lymphocyte cell surface that plays an essential role in adaptive immune response. When antigen presenting cells (APCs) activate T-cell receptor (TCR), TCR-mediated signals are transmitted across the cell membrane by the CD3 chains CD3D, CD3E, CD3G and CD3Z. All CD3 chains contain immunoreceptor tyrosine-based activation motifs (ITAMs) in their cytoplasmic domain. Upon TCR engagement, these motifs become phosphorylated by Src family protein tyrosine kinases LCK and FYN, resulting in the activation of downstream signaling pathways. CD3Z ITAMs phosphorylation creates multiple docking sites for the protein kinase ZAP70 leading to ZAP70 phosphorylation and its conversion into a catalytically active enzyme. Plays an important role in intrathymic T-cell differentiation. Additionally, participates in the activity-dependent synapse formation of retinal ganglion cells (RGCs) in both the retina and dorsal lateral geniculate nucleus (dLGN). The chain is T-cell surface glycoprotein CD3 zeta chain (CD247) from Sus scrofa (Pig).